Here is a 269-residue protein sequence, read N- to C-terminus: Protein SET (269 aa).

The disordered stretch occupies residues 1–33; sequence MSSVPKRAKLDGAPADGNTSAAAGNNEEESEAL. Phosphoserine occurs at positions 30, 148, and 152. The interval 227–269 is disordered; sequence LVPDIEVEPEDEEDNEDNDEEAFDDEDGEDGEGEEEEEDEDDK. Acidic residues predominate over residues 231–269; it reads IEVEPEDEEDNEDNDEEAFDDEDGEDGEGEEEEEDEDDK.

It belongs to the nucleosome assembly protein (NAP) family. As to quaternary structure, interacts specifically with B-type cyclins.

In Drosophila melanogaster (Fruit fly), this protein is Protein SET (Set).